A 94-amino-acid polypeptide reads, in one-letter code: Large ribosomal subunit protein bL25 (94 aa).

This sequence belongs to the bacterial ribosomal protein bL25 family. In terms of assembly, part of the 50S ribosomal subunit; part of the 5S rRNA/L5/L18/L25 subcomplex. Contacts the 5S rRNA. Binds to the 5S rRNA independently of L5 and L18.

Its function is as follows. This is one of the proteins that binds to the 5S RNA in the ribosome where it forms part of the central protuberance. This Cronobacter sakazakii (strain ATCC BAA-894) (Enterobacter sakazakii) protein is Large ribosomal subunit protein bL25.